Reading from the N-terminus, the 827-residue chain is Zinc finger protein 438 (827 aa).

Disordered stretches follow at residues 1–31 (MQNS…LQNK), 117–173 (LKLP…LYKP), and 193–232 (ALTN…AKQD). Composition is skewed to polar residues over residues 16 to 31 (NIPS…LQNK) and 150 to 159 (PAQTQMCPQM). A compositionally biased stretch (pro residues) spans 217 to 226 (PATPASPTPE). 3 consecutive C2H2-type zinc fingers follow at residues 506-528 (HRCH…MNTH), 534-556 (YSCR…MKLH), and 566-589 (MCCE…KEVH). The interval 682–723 (FPGSKGTQEELVQHASHDWKRHPERGKPEKVHSSSEESHACP) is disordered. Basic and acidic residues-rich tracts occupy residues 688 to 699 (TQEELVQHASHD) and 706 to 721 (RGKP…ESHA). Residues 775 to 798 (FNCLLCAEMLGQKEDLLHHWKHQH) form a C2H2-type 4 zinc finger.

The protein resides in the nucleus. Functionally, acts as a transcriptional repressor. This chain is Zinc finger protein 438 (ZNF438), found in Pongo abelii (Sumatran orangutan).